A 523-amino-acid chain; its full sequence is 2-isopropylmalate synthase (523 aa).

One can recognise a Pyruvate carboxyltransferase domain in the interval 5–267; sequence VIIFDTTLRD…ETGINAKEIH (263 aa). Asp-14, His-202, His-204, and Asn-238 together coordinate Mn(2+). The regulatory domain stretch occupies residues 392 to 523; sequence GLQQLVVHSD…KQARTELGGV (132 aa).

This sequence belongs to the alpha-IPM synthase/homocitrate synthase family. LeuA type 1 subfamily. As to quaternary structure, homodimer. The cofactor is Mn(2+).

Its subcellular location is the cytoplasm. The enzyme catalyses 3-methyl-2-oxobutanoate + acetyl-CoA + H2O = (2S)-2-isopropylmalate + CoA + H(+). Its pathway is amino-acid biosynthesis; L-leucine biosynthesis; L-leucine from 3-methyl-2-oxobutanoate: step 1/4. Catalyzes the condensation of the acetyl group of acetyl-CoA with 3-methyl-2-oxobutanoate (2-ketoisovalerate) to form 3-carboxy-3-hydroxy-4-methylpentanoate (2-isopropylmalate). The protein is 2-isopropylmalate synthase of Shewanella loihica (strain ATCC BAA-1088 / PV-4).